The chain runs to 207 residues: Holliday junction branch migration complex subunit RuvA (207 aa).

Residues 1-64 are domain I; sequence MIGLINGQVQ…EDAQLLYGFI (64 aa). Residues 65–143 are domain II; the sequence is DRKERDVFRQ…NIEVDSSHLE (79 aa). The tract at residues 144–152 is flexible linker; sequence FAMQPAPIS. Positions 153–207 are domain III; that stretch reads AEGSIIAEVEGALISLGYKEREAQQAIKAAKSNGETFADTQSLLKATLQQFQSFK.

It belongs to the RuvA family. In terms of assembly, homotetramer. Forms an RuvA(8)-RuvB(12)-Holliday junction (HJ) complex. HJ DNA is sandwiched between 2 RuvA tetramers; dsDNA enters through RuvA and exits via RuvB. An RuvB hexamer assembles on each DNA strand where it exits the tetramer. Each RuvB hexamer is contacted by two RuvA subunits (via domain III) on 2 adjacent RuvB subunits; this complex drives branch migration. In the full resolvosome a probable DNA-RuvA(4)-RuvB(12)-RuvC(2) complex forms which resolves the HJ.

Its subcellular location is the cytoplasm. Its function is as follows. The RuvA-RuvB-RuvC complex processes Holliday junction (HJ) DNA during genetic recombination and DNA repair, while the RuvA-RuvB complex plays an important role in the rescue of blocked DNA replication forks via replication fork reversal (RFR). RuvA specifically binds to HJ cruciform DNA, conferring on it an open structure. The RuvB hexamer acts as an ATP-dependent pump, pulling dsDNA into and through the RuvAB complex. HJ branch migration allows RuvC to scan DNA until it finds its consensus sequence, where it cleaves and resolves the cruciform DNA. The protein is Holliday junction branch migration complex subunit RuvA of Psychrobacter cryohalolentis (strain ATCC BAA-1226 / DSM 17306 / VKM B-2378 / K5).